Reading from the N-terminus, the 425-residue chain is Protein disulfide isomerase-like 5-3 (425 aa).

A signal peptide spans 1–28 (MGKPTLPPVVVVVVLLLLVVVLPATTCG). Residues 29 to 153 (ADAGGGGEAE…LVENLKKLVA (125 aa)) enclose the Thioredoxin domain. Residues C75 and C78 each act as nucleophile in the active site. C75 and C78 are joined by a disulfide. The chain crosses the membrane as a helical span at residues 386-406 (LLGVNAVYILVFLVAVLVLLM).

It belongs to the protein disulfide isomerase family.

Its subcellular location is the membrane. Its function is as follows. Acts as a protein-folding catalyst that interacts with nascent polypeptides to catalyze the formation, isomerization, and reduction or oxidation of disulfide bonds. May play a role in storage protein biogenesis. This Oryza sativa subsp. japonica (Rice) protein is Protein disulfide isomerase-like 5-3 (PDIL5-3).